A 514-amino-acid polypeptide reads, in one-letter code: ATP synthase subunit alpha (514 aa).

G170–T177 lines the ATP pocket.

It belongs to the ATPase alpha/beta chains family. F-type ATPases have 2 components, CF(1) - the catalytic core - and CF(0) - the membrane proton channel. CF(1) has five subunits: alpha(3), beta(3), gamma(1), delta(1), epsilon(1). CF(0) has three main subunits: a(1), b(2) and c(9-12). The alpha and beta chains form an alternating ring which encloses part of the gamma chain. CF(1) is attached to CF(0) by a central stalk formed by the gamma and epsilon chains, while a peripheral stalk is formed by the delta and b chains.

It is found in the cell inner membrane. It catalyses the reaction ATP + H2O + 4 H(+)(in) = ADP + phosphate + 5 H(+)(out). In terms of biological role, produces ATP from ADP in the presence of a proton gradient across the membrane. The alpha chain is a regulatory subunit. The chain is ATP synthase subunit alpha from Psychrobacter arcticus (strain DSM 17307 / VKM B-2377 / 273-4).